The primary structure comprises 238 residues: Probable transcriptional regulatory protein HH_1604 (238 aa).

The protein belongs to the TACO1 family.

It is found in the cytoplasm. The polypeptide is Probable transcriptional regulatory protein HH_1604 (Helicobacter hepaticus (strain ATCC 51449 / 3B1)).